Here is an 86-residue protein sequence, read N- to C-terminus: Bacteriocin thailandicin (86 aa).

The cyclopeptide (Leu-Trp) cross-link spans 23-86; sequence LTANLGISSY…KYGAKYSAAW (64 aa).

It localises to the secreted. Its function is as follows. Cyclopeptide antibiotic with bacteriolytic activity against the Gram-positive bacteria S.aureus and S.thermophilus, and lower activity against the Gram-negative bacteria E.coli and P.aeruginosa. The polypeptide is Bacteriocin thailandicin (Enterococcus thailandicus).